The chain runs to 495 residues: Glucokinase (495 aa).

Residues 3-483 (SALLDEAARI…SGVGAALIAL (481 aa)) form the Hexokinase domain. Residues 57 to 206 (NGTEKGLYLA…GLPVRVAALV (150 aa)) form a hexokinase small subdomain region. Position 93 (Lys-93) interacts with ATP. The interval 149–175 (DLGFTFSFPVRQLGINKGTLIRWTKGF) is glucose-binding. A hexokinase large subdomain region spans residues 207–472 (NDTVGTLMAR…KKIRIGISKD (266 aa)). Residue 472 to 477 (DGSGVG) coordinates ATP.

Belongs to the hexokinase family. In terms of assembly, monomer.

It carries out the reaction D-glucose + ATP = D-glucose 6-phosphate + ADP + H(+). It catalyses the reaction a D-hexose + ATP = a D-hexose 6-phosphate + ADP + H(+). The catalysed reaction is D-mannose + ATP = D-mannose 6-phosphate + ADP + H(+). The enzyme catalyses D-glucosamine + ATP = D-glucosamine 6-phosphate + ADP + H(+). Its pathway is carbohydrate metabolism; hexose metabolism. It participates in carbohydrate degradation; glycolysis; D-glyceraldehyde 3-phosphate and glycerone phosphate from D-glucose: step 1/4. Its function is as follows. The enzyme has great affinity for glucose. Mannose, 2-deoxyglucose and glucosamine can serve as substrates. The protein is Glucokinase (glkA) of Aspergillus niger.